Consider the following 511-residue polypeptide: Exodeoxyribonuclease 7 large subunit (511 aa).

The protein belongs to the XseA family. In terms of assembly, heterooligomer composed of large and small subunits.

The protein localises to the cytoplasm. The enzyme catalyses Exonucleolytic cleavage in either 5'- to 3'- or 3'- to 5'-direction to yield nucleoside 5'-phosphates.. In terms of biological role, bidirectionally degrades single-stranded DNA into large acid-insoluble oligonucleotides, which are then degraded further into small acid-soluble oligonucleotides. The polypeptide is Exodeoxyribonuclease 7 large subunit (Brucella ovis (strain ATCC 25840 / 63/290 / NCTC 10512)).